The primary structure comprises 235 residues: MQQKSDNVVSHYVFEAPVRIWHWLTVLCMAVLMVTGYFIGKPLPSVSGEATYLFYMGYIRLIHFSAGMVFTVVLLMRIYWAFVGNRYSRELFIVPVWRKSWWQGVWYEIRWYLFLAKRPSADIGHNPIAQAAMFGYFLMSVFMIITGFALYSEHSQYAIFAPFRYVVEFFYWTGGNSMDIHSWHRLGMWLIGAFVIGHVYMALREDIMSDDTVISTMVNGYRSHKFGKISNKERS.

Topologically, residues Met1–Arg19 are cytoplasmic. The helical transmembrane segment at Ile20–Gly40 threads the bilayer. Topologically, residues Lys41–His63 are periplasmic. A helical transmembrane segment spans residues Phe64–Gly84. Residues Asn85–Gln130 are Cytoplasmic-facing. The chain crosses the membrane as a helical span at residues Ala131–Tyr151. Topologically, residues Ser152 to Arg185 are periplasmic. The helical transmembrane segment at Leu186 to Leu203 threads the bilayer. The Cytoplasmic portion of the chain corresponds to Arg204–Ser235.

The protein belongs to the HupC/HyaC/HydC family.

Its subcellular location is the cell inner membrane. In terms of biological role, probable b-type cytochrome. In Escherichia coli O157:H7, this protein is Probable Ni/Fe-hydrogenase 1 B-type cytochrome subunit (hyaC).